A 1032-amino-acid chain; its full sequence is Protein phosphatase 1 regulatory subunit 12A (1032 aa).

Residues 35–38 (KVKF) carry the KVKF motif motif. 6 ANK repeats span residues 39-68 (DDGAVFLAACSSGDTDEVLKLLHRGADINY), 72-101 (DGLTALHQACIDDNVDMVKFLVENGANINQ), 105-134 (EGWIPLHAAASCGYLDIAEFLIGQGAHVGA), 138-164 (EGDTPLDIAEEEAMEELLQNEVNRQGV), 198-227 (SGGTALHVAAAKGYTEVLKLLIQAGYDVNI), and 231-260 (DGWTPLHAAAHWGKEEACRILVDNLCDMET). (3S)-3-hydroxyasparagine; by HIF1AN is present on residues asparagine 67 and asparagine 100. Residue asparagine 226 is modified to (3S)-3-hydroxyasparagine; by HIF1AN. Disordered regions lie at residues 290-553 (LHSE…HRSC) and 588-928 (SSTS…RLEK). A compositionally biased stretch (basic and acidic residues) spans 291–300 (HSEKRDKKSP). Serine 299 is subject to Phosphoserine. Positions 302 to 316 (IESTANMENNQPQKT) are enriched in polar residues. A compositionally biased stretch (basic and acidic residues) spans 318–340 (KNKETLIIEPEKNASRIESLEQE). The segment covering 357-369 (SEEDEEDDSESEA) has biased composition (acidic residues). The segment covering 383 to 399 (AHTASTQAAPAAVTTPT) has biased composition (low complexity). The span at 400–421 (LSSNQGTPTSPVKKFPTSTTKI) shows a compositional bias: polar residues. Residues serine 422 and serine 432 each carry the phosphoserine modification. The span at 422–432 (SPKEEERKDES) shows a compositional bias: basic and acidic residues. Threonine 443 carries the phosphothreonine modification. Serine 445 carries the phosphoserine modification. Tyrosine 446 is subject to Phosphotyrosine. Residues 469-480 (RSASSPRLSSSL) are compositionally biased toward low complexity. Serine 472 bears the Phosphoserine; by NUAK1 mark. Serine 473 is modified (phosphoserine; by CDK1). Serine 477 carries the phosphoserine modification. Residues 481–491 (DNKEKEKDNKG) are compositionally biased toward basic and acidic residues. Phosphoserine occurs at positions 507 and 509. The span at 540–551 (NSSINEGSTYHR) shows a compositional bias: polar residues. Serine 601 carries the post-translational modification Phosphoserine. Residues 602–612 (PAGTQSSTSNR) show a composition bias toward polar residues. Residues 614-625 (WAEDSTEKEKDS) are compositionally biased toward basic and acidic residues. At serine 618 the chain carries Phosphoserine. A compositionally biased stretch (low complexity) spans 633–661 (LVAPTVVSAAASSTTALTTTTAGTLSSTS). A compositionally biased stretch (basic and acidic residues) spans 674-683 (VRDEESESQR). The segment at 683 to 866 (RKARSRQARQ…VSFWTQDSDE (184 aa)) is interaction with ROCK2. Residues 684–694 (KARSRQARQSR) show a composition bias toward basic residues. Phosphoserine; by PKA and PKG; in vitro occurs at positions 693 and 696. Threonine 697 carries the phosphothreonine; by ROCK1, ROCK2, CDC42BP, ZIPK/DAPK3 and RAF1 modification. Basic and acidic residues predominate over residues 719–768 (RTREQENEEKDKEEKEKQDKEKQEEKKESEVSREDEYKQKYSRTYDETYA). Over residues 774–797 (STSSSSTPSSSSLSTLGSSLYASS) the composition is skewed to low complexity. The span at 798-812 (QLNRPNSLVGITSAY) shows a compositional bias: polar residues. The residue at position 804 (serine 804) is a Phosphoserine. Over residues 816–842 (LTKDNEREGEKKEEEKEGEDKSQPKSI) the composition is skewed to basic and acidic residues. Positions 843–854 (RERRRPREKRRS) are enriched in basic residues. Serine 854 is modified (phosphoserine; by ROCK2). Residues serine 864 and serine 873 each carry the phosphoserine modification. Residues 869-885 (QERQSDTEDGSSKRDTQ) show a composition bias toward basic and acidic residues. The span at 886–900 (TDSVSRYDSSSTSSS) shows a compositional bias: low complexity. 2 positions are modified to phosphoserine: serine 905 and serine 910. Serine 912 is subject to Phosphoserine; by NUAK1. Residues 916 to 928 (LEERKPYGSRLEK) show a composition bias toward basic and acidic residues. At serine 997 the chain carries Phosphoserine.

As to quaternary structure, PP1 comprises a catalytic subunit, PPP1CA, PPP1CB or PPP1CC, and one or several targeting or regulatory subunits. PPP1R12A mediates binding to myosin. Interacts with ARHA and CIT. Binds PPP1R12B, ROCK1 and IL16. Interacts directly with PRKG1. Non-covalent dimer of 2 dimers; PRKG1-PRKG1 and PPP1R12A-PPP1R12A. Interacts with SMTNL1. Interacts with PPP1CB; the interaction is direct. Interacts (when phosphorylated at Ser-445, Ser-472 and Ser-910) with 14-3-3. Interacts with ROCK1 and ROCK2. Interacts with isoform 1 and isoform 2 of ZIPK/DAPK3. Interacts with RAF1. Interacts with HIF1AN. Interacts with NCKAP1L. In terms of processing, phosphorylated on upon DNA damage, probably by ATM or ATR. Phosphorylated by CIT (Rho-associated kinase). Phosphorylated cooperatively by ROCK1 and CDC42BP on Thr-697. In vitro, phosphorylation of Ser-696 by PKA and PKG appears to prevent phosphorylation of the inhibitory site Thr-697, probably mediated by PRKG1. May be phosphorylated at Thr-697 by DMPK; may inhibit the myosin phosphatase activity. Phosphorylated at Ser-473 by CDK1 during mitosis, creating docking sites for the POLO box domains of PLK1. Subsequently, PLK1 binds and phosphorylates PPP1R12A. As to expression, smooth muscle. Detected in aorta, portal vein, stomach, intestine, bladder and lung.

Its subcellular location is the cytoplasm. It localises to the cytoskeleton. It is found in the stress fiber. Its function is as follows. Key regulator of protein phosphatase 1C (PPP1C). Mediates binding to myosin. As part of the PPP1C complex, involved in dephosphorylation of PLK1. Capable of inhibiting HIF1AN-dependent suppression of HIF1A activity. In Rattus norvegicus (Rat), this protein is Protein phosphatase 1 regulatory subunit 12A.